Reading from the N-terminus, the 320-residue chain is ATP-dependent 6-phosphofructokinase (320 aa).

Glycine 12 contributes to the ATP binding site. Residues 22–26 and 55–60 each bind ADP; these read RGVVR and RYSVSD. ATP contacts are provided by residues 73–74 and 103–106; these read RF and GDGS. Aspartate 104 lines the Mg(2+) pocket. Residue 126–128 coordinates substrate; that stretch reads TID. Aspartate 128 (proton acceptor) is an active-site residue. Arginine 155 lines the ADP pocket. Substrate-binding positions include arginine 163 and 170–172; that span reads MGR. ADP contacts are provided by residues 186-188, lysine 212, and 214-216; these read GCE and KKH. Residues glutamate 223, arginine 244, and 250-253 contribute to the substrate site; that span reads HIQR.

The protein belongs to the phosphofructokinase type A (PFKA) family. ATP-dependent PFK group I subfamily. Prokaryotic clade 'B1' sub-subfamily. In terms of assembly, homotetramer. The cofactor is Mg(2+).

Its subcellular location is the cytoplasm. It carries out the reaction beta-D-fructose 6-phosphate + ATP = beta-D-fructose 1,6-bisphosphate + ADP + H(+). Its pathway is carbohydrate degradation; glycolysis; D-glyceraldehyde 3-phosphate and glycerone phosphate from D-glucose: step 3/4. With respect to regulation, allosterically activated by ADP and other diphosphonucleosides, and allosterically inhibited by phosphoenolpyruvate. Its function is as follows. Catalyzes the phosphorylation of D-fructose 6-phosphate to fructose 1,6-bisphosphate by ATP, the first committing step of glycolysis. This chain is ATP-dependent 6-phosphofructokinase, found in Enterobacter cloacae.